The sequence spans 119 residues: Ribonuclease P protein component (119 aa).

It belongs to the RnpA family. As to quaternary structure, consists of a catalytic RNA component (M1 or rnpB) and a protein subunit.

The catalysed reaction is Endonucleolytic cleavage of RNA, removing 5'-extranucleotides from tRNA precursor.. Its function is as follows. RNaseP catalyzes the removal of the 5'-leader sequence from pre-tRNA to produce the mature 5'-terminus. It can also cleave other RNA substrates such as 4.5S RNA. The protein component plays an auxiliary but essential role in vivo by binding to the 5'-leader sequence and broadening the substrate specificity of the ribozyme. This chain is Ribonuclease P protein component, found in Escherichia coli O6:H1 (strain CFT073 / ATCC 700928 / UPEC).